The primary structure comprises 342 residues: MATH domain and coiled-coil domain-containing protein At3g44800 (342 aa).

One can recognise an MATH domain in the interval 3-129 (YEKFTWVIKN…NNEVKIVAEV (127 aa)). Residues 253–327 (KVDWLERKLE…ALLEKEKGKV (75 aa)) are a coiled coil.

This is MATH domain and coiled-coil domain-containing protein At3g44800 from Arabidopsis thaliana (Mouse-ear cress).